The following is a 131-amino-acid chain: Con-Ins Q1b (131 aa).

A signal peptide spans 1-24; sequence MTTSSYFLLVALGLLLYLCQSSFG. Cystine bridges form between Cys-29–Cys-107, Cys-41–Cys-110, Cys-53–Cys-123, and Cys-109–Cys-114. Residues 59–92 constitute a propeptide, c peptide; sequence LQGGTDDARKKRGRASLLRKRRGFLSMLKARAKR. At Glu-118 the chain carries 4-carboxyglutamate; partial. Position 130 is a serine amide (Ser-130).

It belongs to the insulin family. In terms of assembly, heterodimer of A and B chains; disulfide-linked. In terms of tissue distribution, expressed by the venom gland.

The protein localises to the secreted. Functionally, this venom insulin facilitates prey capture by rapidly inducing hypoglycemic shock. Intraperitoneal injection of this peptide into zebrafish lowers blood glucose with the same potency than human insulin. In vivo, when applied to water, this peptide reduces overall locomotor activity of zebrafish larvae, observed as a significant decrease in the percentage of time spent swimming and movement frequency. The chain is Con-Ins Q1b from Conus quercinus (Oak cone).